The primary structure comprises 178 residues: Ribonuclease M5 (178 aa).

Residues 10 to 94 (DGVIVCEGKT…YVDMNARLKN (85 aa)) form the Toprim domain. Mg(2+)-binding residues include E16, D62, and D64.

Belongs to the ribonuclease M5 family. The cofactor is Mg(2+).

The protein localises to the cytoplasm. It carries out the reaction Endonucleolytic cleavage of RNA, removing 21 and 42 nucleotides, respectively, from the 5'- and 3'-termini of a 5S-rRNA precursor.. Its function is as follows. Required for correct processing of both the 5' and 3' ends of 5S rRNA precursor. Cleaves both sides of a double-stranded region yielding mature 5S rRNA in one step. This is Ribonuclease M5 (rnmV) from Mycoplasma genitalium (strain ATCC 33530 / DSM 19775 / NCTC 10195 / G37) (Mycoplasmoides genitalium).